The primary structure comprises 88 residues: Small ribosomal subunit protein bS16c (88 aa).

Component of the chloroplast small ribosomal subunit (SSU). Mature 70S chloroplast ribosomes of higher plants consist of a small (30S) and a large (50S) subunit. The 30S small subunit contains 1 molecule of ribosomal RNA (16S rRNA) and 24 different proteins. The 50S large subunit contains 3 rRNA molecules (23S, 5S and 4.5S rRNA) and 33 different proteins.

It is found in the plastid. Its subcellular location is the chloroplast. Its function is as follows. Component of the chloroplast ribosome (chloro-ribosome), a dedicated translation machinery responsible for the synthesis of chloroplast genome-encoded proteins, including proteins of the transcription and translation machinery and components of the photosynthetic apparatus. The polypeptide is Small ribosomal subunit protein bS16c (Spinacia oleracea (Spinach)).